Consider the following 857-residue polypeptide: Bifunctional levopimaradiene synthase, chloroplastic (857 aa).

The transit peptide at 1-33 directs the protein to the chloroplast; it reads MALPSSSLSSQIHTGATTQCIPHFHGSLNAGTS. Lysine 257 is a substrate binding site. Mg(2+) contacts are provided by aspartate 390 and aspartate 392. Residues 390 to 393 carry the DXDD motif motif; it reads DIDD. Position 477 (lysine 477) interacts with substrate. Aspartate 609, aspartate 613, asparagine 753, threonine 757, and glutamate 761 together coordinate Mg(2+). The short motif at 609-613 is the DDXXD motif element; the sequence is DDLYD.

The protein belongs to the terpene synthase family. Tpsd subfamily. The cofactor is Mg(2+).

It localises to the plastid. It is found in the chloroplast. It catalyses the reaction (2E,6E,10E)-geranylgeranyl diphosphate = (+)-copalyl diphosphate. The enzyme catalyses (+)-copalyl diphosphate = abieta-7,13-diene + diphosphate. The catalysed reaction is (+)-copalyl diphosphate = abieta-8(14),12-diene + diphosphate. It carries out the reaction (+)-copalyl diphosphate = neoabietadiene + diphosphate. The protein operates within terpene metabolism; oleoresin biosynthesis. In terms of biological role, involved in defensive oleoresin formation in conifers in response to insect attack or other injury. Involved in diterpene (C20) olefins biosynthesis. Bifunctional enzyme that catalyzes two sequential cyclizations of geranylgeranyl diphosphate (GGPP) to levopimaradiene. Levopimaradiene is the major products of the enzyme with abietadiene and neoabietadiene. No activity with farnesyl diphosphate (FPP) as substrate. The sequence is that of Bifunctional levopimaradiene synthase, chloroplastic from Pinus banksiana (Jack pine).